The primary structure comprises 983 residues: Ephrin type-A receptor 3 (983 aa).

The N-terminal stretch at 1 to 20 (MDCHLSILVLLGCCVLSCSG) is a signal peptide. The Extracellular portion of the chain corresponds to 21-540 (ELSPQPSNEV…SFSISGENSH (520 aa)). Positions 29 to 206 (EVNLLDSKTI…YFKKCPFTVK (178 aa)) constitute an Eph LBD domain. N-linked (GlcNAc...) asparagine glycosylation is found at N231, N336, N390, N403, and N492. 2 consecutive Fibronectin type-III domains span residues 324–434 (PPSA…TNQA) and 435–530 (APSP…TSPD). The chain crosses the membrane as a helical span at residues 541 to 564 (VVMIAISAAVAIIVLTVVTYVLVG). Over 565–983 (RFCGYHKSKH…TQSKNGPVPV (419 aa)) the chain is Cytoplasmic. A phosphotyrosine; by autocatalysis mark is found at Y596 and Y602. The 262-residue stretch at 621–882 (ISIDKVVGAG…QIVSILDKLI (262 aa)) folds into the Protein kinase domain. Residues 628–633 (GAGEFG), K653, and 700–706 (EYMENGS) each bind ATP. Phosphotyrosine; by autocatalysis is present on Y701. Residue D746 is the Proton acceptor of the active site. 750–751 (RN) contacts ATP. Phosphotyrosine; by autocatalysis is present on Y779. The 65-residue stretch at 911–975 (ATFHTTGDWL…ISTIKALETQ (65 aa)) folds into the SAM domain. The residue at position 937 (Y937) is a Phosphotyrosine. The PDZ-binding motif lies at 981–983 (VPV).

The protein belongs to the protein kinase superfamily. Tyr protein kinase family. Ephrin receptor subfamily. In terms of assembly, heterotetramer upon binding of the ligand. The heterotetramer is composed of an ephrin dimer and a receptor dimer. Oligomerization is probably required to induce biological responses. Forms a ternary EFNA5-EPHA3-ADAM10 complex mediating EFNA5 extracellular domain shedding by ADAM10 which regulates the EFNA5-EPHA3 complex internalization and function. Interacts (phosphorylated) with PTPN1; dephosphorylates EPHA3 and may regulate its trafficking and function. Interacts (phosphorylated) with CRK; mediates EFNA5-EPHA3 signaling through RHOA GTPase activation. Interacts with NCK1 (via SH2 domain); mediates EFNA5-EPHA3 signaling. In terms of processing, autophosphorylates upon activation by EFNA5. Phosphorylation on Tyr-602 mediates interaction with NCK1. Dephosphorylated by PTPN1. In terms of tissue distribution, greatest levels of expression occurring in the brain, also detected in testis. Expressed in myogenic progenitor cells.

It is found in the cell membrane. The protein resides in the secreted. It carries out the reaction L-tyrosyl-[protein] + ATP = O-phospho-L-tyrosyl-[protein] + ADP + H(+). In terms of biological role, receptor tyrosine kinase which binds promiscuously membrane-bound ephrin family ligands residing on adjacent cells, leading to contact-dependent bidirectional signaling into neighboring cells. The signaling pathway downstream of the receptor is referred to as forward signaling while the signaling pathway downstream of the ephrin ligand is referred to as reverse signaling. Highly promiscuous for ephrin-A ligands it binds preferentially EFNA5. Upon activation by EFNA5 regulates cell-cell adhesion, cytoskeletal organization and cell migration. Plays a role in cardiac cells migration and differentiation and regulates the formation of the atrioventricular canal and septum during development probably through activation by EFNA1. Involved in the retinotectal mapping of neurons. May also control the segregation but not the guidance of motor and sensory axons during neuromuscular circuit development. In Mus musculus (Mouse), this protein is Ephrin type-A receptor 3 (Epha3).